Here is a 134-residue protein sequence, read N- to C-terminus: Arsenate reductase (134 aa).

Catalysis depends on nucleophile residues Cys11, Cys83, and Cys90. Cystine bridges form between Cys11–Cys83 and Cys83–Cys90.

This sequence belongs to the low molecular weight phosphotyrosine protein phosphatase family. Thioredoxin-coupled ArsC subfamily.

It is found in the cytoplasm. The enzyme catalyses arsenate + [thioredoxin]-dithiol + H(+) = arsenite + [thioredoxin]-disulfide + H2O. Catalyzes the reduction of arsenate [As(V)] to arsenite [As(III)]. The protein is Arsenate reductase of Brevibacillus brevis (strain 47 / JCM 6285 / NBRC 100599).